Reading from the N-terminus, the 62-residue chain is Small ribosomal subunit protein eS27 (62 aa).

Residues Cys-17, Cys-20, Cys-36, and Cys-39 each contribute to the Zn(2+) site. Residues 17-39 (CPDCENEQIIFEKASTVVDCVVC) form a C4-type zinc finger.

This sequence belongs to the eukaryotic ribosomal protein eS27 family. In terms of assembly, part of the 30S ribosomal subunit. Zn(2+) serves as cofactor.

The protein is Small ribosomal subunit protein eS27 of Methanosphaerula palustris (strain ATCC BAA-1556 / DSM 19958 / E1-9c).